A 186-amino-acid chain; its full sequence is Translation initiation factor IF-3 (186 aa).

Residues 1-20 (MINRSAGKDRDRSRSGDKEL) form a disordered region.

This sequence belongs to the IF-3 family. Monomer.

The protein localises to the cytoplasm. Functionally, IF-3 binds to the 30S ribosomal subunit and shifts the equilibrium between 70S ribosomes and their 50S and 30S subunits in favor of the free subunits, thus enhancing the availability of 30S subunits on which protein synthesis initiation begins. In Borrelia hermsii (strain HS1 / DAH), this protein is Translation initiation factor IF-3.